The following is a 436-amino-acid chain: GDP-mannose 6-dehydrogenase (436 aa).

Residues Tyr10, Val11, Asp30, Lys35, Thr86, and Thr124 each contribute to the NAD(+) site. The GDP-alpha-D-mannuronate site is built by Glu161, Lys210, Asn214, His217, Asn225, Tyr256, Tyr257, Arg259, and Gly265. Cys268 is a catalytic residue. Lys271 is a binding site for NAD(+). Lys324 serves as a coordination point for GDP-alpha-D-mannuronate. Arg331 is a binding site for NAD(+).

It belongs to the UDP-glucose/GDP-mannose dehydrogenase family.

It catalyses the reaction GDP-alpha-D-mannose + 2 NAD(+) + H2O = GDP-alpha-D-mannuronate + 2 NADH + 3 H(+). It participates in glycan biosynthesis; alginate biosynthesis. In terms of biological role, catalyzes the oxidation of guanosine diphospho-D-mannose (GDP-D-mannose) to GDP-D-mannuronic acid, a precursor for alginate polymerization. The alginate layer causes a mucoid phenotype and is essential for cyst formation. In Azotobacter vinelandii, this protein is GDP-mannose 6-dehydrogenase (algD).